We begin with the raw amino-acid sequence, 65 residues long: Neurotoxin BmK AGAP-SYPU2 (65 aa).

In terms of domain architecture, LCN-type CS-alpha/beta spans 2-64; it reads KDGYIVDDKN…VPIRVPGRCN (63 aa). Intrachain disulfides connect cysteine 12-cysteine 63, cysteine 16-cysteine 36, cysteine 22-cysteine 46, and cysteine 26-cysteine 48.

In terms of tissue distribution, expressed by the venom gland.

It localises to the secreted. Its function is as follows. Alpha toxins bind voltage-independently at site-3 of sodium channels and inhibit the inactivation of the activated channels, thereby blocking neuronal transmission. In vivo, shows analgesic activity (ED(50) is 1.42 mg/kg) and antitumor activity against Ehrlich ascites tumor and S-180 fibrosarcoma models. The polypeptide is Neurotoxin BmK AGAP-SYPU2 (Olivierus martensii (Manchurian scorpion)).